The chain runs to 101 residues: Large ribosomal subunit protein uL24 (101 aa).

Belongs to the universal ribosomal protein uL24 family. In terms of assembly, part of the 50S ribosomal subunit.

Functionally, one of two assembly initiator proteins, it binds directly to the 5'-end of the 23S rRNA, where it nucleates assembly of the 50S subunit. In terms of biological role, one of the proteins that surrounds the polypeptide exit tunnel on the outside of the subunit. The polypeptide is Large ribosomal subunit protein uL24 (Streptococcus mutans serotype c (strain ATCC 700610 / UA159)).